A 264-amino-acid polypeptide reads, in one-letter code: 5'-nucleotidase SurE (264 aa).

Residues Asp-10, Asp-11, Ser-43, and Asn-99 each contribute to the a divalent metal cation site.

The protein belongs to the SurE nucleotidase family. It depends on a divalent metal cation as a cofactor.

Its subcellular location is the cytoplasm. It carries out the reaction a ribonucleoside 5'-phosphate + H2O = a ribonucleoside + phosphate. Functionally, nucleotidase that shows phosphatase activity on nucleoside 5'-monophosphates. This is 5'-nucleotidase SurE from Methanococcus maripaludis (strain C5 / ATCC BAA-1333).